A 503-amino-acid polypeptide reads, in one-letter code: Sugar phosphate exchanger 3 (503 aa).

A helical membrane pass occupies residues 20 to 40 (YTHHHLAAFLLTFFSYSLLHA). 2 N-linked (GlcNAc...) asparagine glycosylation sites follow: N62 and N71. The next 5 helical transmembrane spans lie at 87 to 107 (TLFL…GLFI), 119 to 139 (LVLT…GTLT), 152 to 172 (LVWI…VAIM), 183 to 203 (FVFG…AFLA), and 214 to 234 (AFLV…FGLV). A glycan (N-linked (GlcNAc...) asparagine) is linked at N275. 6 consecutive transmembrane segments (helical) span residues 300-322 (GVLL…FFWL), 342-362 (IWYD…SDLM), 367-387 (PVLT…SHSP), 395-415 (FIMS…SSAI), 437-457 (GIVD…VPLI), and 466-486 (VFYF…PLIV).

Belongs to the major facilitator superfamily. Organophosphate:Pi antiporter (OPA) (TC 2.A.1.4) family.

It is found in the endoplasmic reticulum membrane. It localises to the lysosome membrane. Functionally, unlike the other SLC37 members, seems to lack glucose-6-phosphate antiporter activity. The sequence is that of Sugar phosphate exchanger 3 (slc37a3) from Xenopus laevis (African clawed frog).